Here is a 560-residue protein sequence, read N- to C-terminus: 2-succinyl-5-enolpyruvyl-6-hydroxy-3-cyclohexene-1-carboxylate synthase (560 aa).

It belongs to the TPP enzyme family. MenD subfamily. Homodimer. Mg(2+) is required as a cofactor. Requires Mn(2+) as cofactor. Thiamine diphosphate serves as cofactor.

It catalyses the reaction isochorismate + 2-oxoglutarate + H(+) = 5-enolpyruvoyl-6-hydroxy-2-succinyl-cyclohex-3-ene-1-carboxylate + CO2. It participates in quinol/quinone metabolism; 1,4-dihydroxy-2-naphthoate biosynthesis; 1,4-dihydroxy-2-naphthoate from chorismate: step 2/7. It functions in the pathway quinol/quinone metabolism; menaquinone biosynthesis. Its function is as follows. Catalyzes the thiamine diphosphate-dependent decarboxylation of 2-oxoglutarate and the subsequent addition of the resulting succinic semialdehyde-thiamine pyrophosphate anion to isochorismate to yield 2-succinyl-5-enolpyruvyl-6-hydroxy-3-cyclohexene-1-carboxylate (SEPHCHC). The chain is 2-succinyl-5-enolpyruvyl-6-hydroxy-3-cyclohexene-1-carboxylate synthase from Lactococcus lactis subsp. lactis (strain IL1403) (Streptococcus lactis).